We begin with the raw amino-acid sequence, 610 residues long: Mitochondrial import receptor subunit TOM70 (610 aa).

Alanine 2 is subject to N-acetylalanine. Topologically, residues 2–41 (AASKPVEAAMAAAAAPASGNGVGSSGGTAAPGSGAGTLPR) are mitochondrial intermembrane. A helical membrane pass occupies residues 42–62 (WHVALAIGAPLLLGAGAMYLW). Residues 63 to 610 (SRRRRRREAG…KKYGLKPPTL (548 aa)) lie on the Cytoplasmic side of the membrane. Residues 69–109 (REAGGRGDASGLKRNSERKTPEGRASPALGSGPDGSGDSLE) form a disordered region. Arginine 74 is subject to Omega-N-methylarginine. Low complexity predominate over residues 93–108 (ASPALGSGPDGSGDSL). Phosphoserine is present on residues serine 94, serine 99, serine 104, serine 107, and serine 112. 2 TPR repeats span residues 116–149 (AQAA…CPTE) and 155–188 (STFY…NPKY). Lysine 187 is modified (N6-acetyllysine). Lysine 277 is covalently cross-linked (Glycyl lysine isopeptide (Lys-Gly) (interchain with G-Cter in SUMO2)). TPR repeat units follow at residues 296 to 329 (ENSG…QGKY), 331 to 364 (AEAL…KEAN), 369 to 402 (ANAL…DPMN), 403 to 436 (SDVY…RPKF), 444 to 477 (CFAL…FPRC), 478 to 511 (AEGY…EPDN), 513 to 546 (TTYV…DNKC), and 547 to 580 (DFAY…AKSE).

It belongs to the Tom70 family. As to quaternary structure, forms part of the preprotein translocase complex of the outer mitochondrial membrane (TOM complex) which consists of at least 7 different proteins (TOMM5, TOMM6, TOMM7, TOMM20, TOMM22, TOMM40 and TOMM70). Interacts with CAPN8. Interacts with TRADD, TRAF6 and STING. Interacts with MAVS. Interacts with HSPA8 and HSP90AA1; both interactions are required for preprotein mitochondrial import. The interaction with HSP90AA1 is direct and mediates the association of TOMM70 with IRF3 and TBK1. Upon mitochondrial depolarization, interacts with PINK1; the interaction is required for PINK1-TOM-TIM23 supercomplex formation which is critical for PINK1 stabilization at the outer mitochondrial membrane, kinase activation and downstream mitophagy.

The protein resides in the mitochondrion outer membrane. Functionally, acts as a receptor of the preprotein translocase complex of the outer mitochondrial membrane (TOM complex). Recognizes and mediates the translocation of mitochondrial preproteins from the cytosol into the mitochondria in a chaperone dependent manner. Mediates TBK1 and IRF3 activation induced by MAVS in response to Sendai virus infection and promotes host antiviral responses during virus infection. The polypeptide is Mitochondrial import receptor subunit TOM70 (Rattus norvegicus (Rat)).